Consider the following 177-residue polypeptide: MRSEVVNMLEYLYPLRTYLIVSGVEKPNVMTADWVVPLSFSPQLLGVAIGHSRYTHSLIKECGEFVVAVPTIELLKDVWKAGTLSGAKENKMEKLSLTLVESKKVKVPSIKECQANLECRVVKEVETGDHTLFVGEILHVTHGDAFKDGKPDINYKFVMHASFGKNFTTNSSERFEP.

The protein belongs to the flavoredoxin family. FMN is required as a cofactor.

This is an uncharacterized protein from Archaeoglobus fulgidus (strain ATCC 49558 / DSM 4304 / JCM 9628 / NBRC 100126 / VC-16).